The chain runs to 416 residues: Neurotensin receptor type 2 (416 aa).

Topologically, residues 1-32 are extracellular; that stretch reads METSSLWPPRPSPSAGLSLEARLGVDTRLWAK. Residues 33 to 55 traverse the membrane as a helical segment; that stretch reads VLFTALYSLIFALGTAGNALSVH. The Cytoplasmic portion of the chain corresponds to 56-64; sequence VVLKARAGR. The chain crosses the membrane as a helical span at residues 65 to 87; the sequence is PGRLRYHVLSLALSALLLLLISV. Residues 88–109 lie on the Extracellular side of the membrane; that stretch reads PMELYNFVWSHYPWVFGDLGCR. The cysteines at positions 108 and 194 are disulfide-linked. The chain crosses the membrane as a helical span at residues 110-131; the sequence is GYYFVRELCAYATVLSVASLSA. At 132-154 the chain is on the cytoplasmic side; that stretch reads ERCLAVCQPLRARRLLTPRRTRR. Residues 155–176 traverse the membrane as a helical segment; it reads LLSLVWVASLGLALPMAVIMGQ. The Extracellular portion of the chain corresponds to 177 to 217; that stretch reads KHEMERADGEPEPASRVCTVLVSRATLQVFIQVNVLVSFVL. Residues 218–237 traverse the membrane as a helical segment; that stretch reads PLALTAFLNGITVNHLVALY. At 238–297 the chain is on the cytoplasmic side; the sequence is SQVPSASAQVNSIPSRLELLSEEGLLGFITWRKTLSLGVQASLVRHKDASQIRSLQHSAQ. A helical membrane pass occupies residues 298-318; the sequence is VLRAIVAVYVICWLPYHARRL. Topologically, residues 319-337 are extracellular; that stretch reads MYCYIPDDGWTDELYDFYH. The chain crosses the membrane as a helical span at residues 338-358; the sequence is YFYMVTNTLFYVSSAVTPVLY. Topologically, residues 359-416 are cytoplasmic; that stretch reads NAVSSSFRKLFLESLSSLCGEQRSVVPLPQEAPESTTSTYSFRLWGSPRNPSLGEIQV. A lipid anchor (S-palmitoyl cysteine) is attached at C377. S410 is modified (phosphoserine).

The protein belongs to the G-protein coupled receptor 1 family. Neurotensin receptor subfamily. NTSR2 sub-subfamily. Expressed maximally in the cerebellum, hippocampus, piriform cortex and neocortex of adult brain.

Its subcellular location is the cell membrane. Its function is as follows. Receptor for the tridecapeptide neurotensin. It is associated with G proteins that activate a phosphatidylinositol-calcium second messenger system. This is Neurotensin receptor type 2 (Ntsr2) from Mus musculus (Mouse).